A 223-amino-acid polypeptide reads, in one-letter code: Arginine kinase (223 aa).

Positions 56-222 (FVISTRVRLI…LELIKIEKEM (167 aa)) constitute a Phosphagen kinase C-terminal domain. ATP-binding positions include 59 to 63 (STRVR) and histidine 68. Cysteine 141 is an L-arginine binding site. Residues 150–154 (RASVH) and 175–180 (RGTRGE) contribute to the ATP site. Glutamate 180 lines the L-arginine pocket.

The protein belongs to the ATP:guanido phosphotransferase family.

The catalysed reaction is L-arginine + ATP = N(omega)-phospho-L-arginine + ADP + H(+). The protein is Arginine kinase of Chionoecetes opilio (Atlantic snow crab).